A 239-amino-acid chain; its full sequence is MLGKTQADQGAAVIRAERLGKTYAEGKMRTPVFDGLDLSVATGETVAIVGASGAGKSTLLHLLGGLDIPTSGEVYVAGRRMSALSDGERGKLRNRSLGFVYQFHHLLPEFTALENVMMPVLLSGQDVSIARGQALQLLESVGLGHRVEHKPSELSGGERQRCAVARALVNKPGCVLGDEPTGNLDDKTAGTVFELMLELNRAQRTSLVLVTHDRSLARRLDRVLELHQGKLRELAPSAV.

The ABC transporter domain occupies I14–V239. Residue G50–S57 participates in ATP binding.

Belongs to the ABC transporter superfamily. Lipoprotein translocase (TC 3.A.1.125) family. The complex is composed of two ATP-binding proteins (LolD) and two transmembrane proteins (LolC and LolE).

The protein localises to the cell inner membrane. Its function is as follows. Part of the ABC transporter complex LolCDE involved in the translocation of mature outer membrane-directed lipoproteins, from the inner membrane to the periplasmic chaperone, LolA. Responsible for the formation of the LolA-lipoprotein complex in an ATP-dependent manner. The protein is Lipoprotein-releasing system ATP-binding protein LolD of Xanthomonas campestris pv. campestris (strain 8004).